The chain runs to 473 residues: Cysteine--tRNA ligase (473 aa).

Cys28 serves as a coordination point for Zn(2+). Residues 30–40 (MTVYDYCHLGH) carry the 'HIGH' region motif. Cys209, His234, and Glu238 together coordinate Zn(2+). Residues 282 to 286 (KMSKS) carry the 'KMSKS' region motif. Residue Lys285 coordinates ATP.

Belongs to the class-I aminoacyl-tRNA synthetase family. As to quaternary structure, monomer. It depends on Zn(2+) as a cofactor.

The protein localises to the cytoplasm. It carries out the reaction tRNA(Cys) + L-cysteine + ATP = L-cysteinyl-tRNA(Cys) + AMP + diphosphate. The chain is Cysteine--tRNA ligase from Neisseria meningitidis serogroup B (strain ATCC BAA-335 / MC58).